Consider the following 1019-residue polypeptide: UPF0182 protein Krad_1193 (1019 aa).

A run of 7 helical transmembrane segments spans residues 19-39 (GAALPTVVILVAVVIAVVVGA), 61-81 (LWLQVLLFTLGALLLAAAVAV), 115-135 (RLVVVVLSAAAGLFGGSVAMS), 169-189 (WLAFLVSFLTAAVVLAGIAGL), 213-233 (VHLASLAAAFLLLRAAGYWLD), 264-284 (AILALIAVVVALLFVAAAVGT), and 291-311 (IGTGLLVVSAIAIGGIYPWAV). 2 disordered regions span residues 897-934 (GNSGAGAGDEGAPPPTAGTPAPTDGATGGPAPDPATGD) and 977-1019 (DAAS…TPTP). Residues 977-1005 (DAASAAEARLERSGTSGPTSSSSPSASSA) show a composition bias toward low complexity. Positions 1006-1019 (PPVPGETPAATPTP) are enriched in pro residues.

Belongs to the UPF0182 family.

It is found in the cell membrane. In Kineococcus radiotolerans (strain ATCC BAA-149 / DSM 14245 / SRS30216), this protein is UPF0182 protein Krad_1193.